Consider the following 930-residue polypeptide: Protein translocase subunit SecA (930 aa).

ATP is bound by residues Gln-87, 105-109 (GEGKT), and Asp-515. The Zn(2+) site is built by Cys-914, Cys-916, Cys-925, and His-926.

It belongs to the SecA family. In terms of assembly, monomer and homodimer. Part of the essential Sec protein translocation apparatus which comprises SecA, SecYEG and auxiliary proteins SecDF-YajC and YidC. The cofactor is Zn(2+).

It is found in the cell inner membrane. The protein localises to the cytoplasm. The catalysed reaction is ATP + H2O + cellular proteinSide 1 = ADP + phosphate + cellular proteinSide 2.. Its function is as follows. Part of the Sec protein translocase complex. Interacts with the SecYEG preprotein conducting channel. Has a central role in coupling the hydrolysis of ATP to the transfer of proteins into and across the cell membrane, serving both as a receptor for the preprotein-SecB complex and as an ATP-driven molecular motor driving the stepwise translocation of polypeptide chains across the membrane. This is Protein translocase subunit SecA from Burkholderia vietnamiensis (strain G4 / LMG 22486) (Burkholderia cepacia (strain R1808)).